The following is a 501-amino-acid chain: Ectoine/hydroxyectoine transporter (501 aa).

Helical transmembrane passes span 9–29 (PVFY…ATLP), 45–65 (IHFG…LITL), 86–106 (FFTW…VFWG), 137–157 (AFFH…LVIA), 190–210 (LAVI…ILQM), 220–240 (VPTS…TYLI), 258–278 (LGSL…VFIL), 311–331 (WTIF…AFIA), 343–363 (VLGV…AFGG), 395–415 (LPMT…FLVT), 441–461 (IVWG…GGLE), and 465–485 (TASL…MASF).

The protein belongs to the BCCT transporter (TC 2.A.15) family.

It localises to the cell inner membrane. Mediates the import of ectoine and hydroxyectoine, which function as osmotic and cold stress protectants. Also has minor uptake activities for the compatible solutes proline and glycine betaine. In Virgibacillus pantothenticus, this protein is Ectoine/hydroxyectoine transporter.